Here is a 561-residue protein sequence, read N- to C-terminus: Alpha-1D adrenergic receptor (561 aa).

At Met1 to Gly90 the chain is on the extracellular side. Positions Thr10–Ala71 are disordered. The segment covering Gly21–Ser56 has biased composition (gly residues). Residues Asn60 and Asn76 are each glycosylated (N-linked (GlcNAc...) asparagine). Residues Val91–Val115 traverse the membrane as a helical segment. Residues Ala116–Tyr127 are Cytoplasmic-facing. A helical transmembrane segment spans residues Phe128–Leu153. The Extracellular portion of the chain corresponds to Gly154–Cys163. A helical transmembrane segment spans residues Asp164–Val186. At Asp187–Ala207 the chain is on the cytoplasmic side. Residues Ala208 to Pro232 traverse the membrane as a helical segment. The Extracellular segment spans residues Val233–Glu245. Residues Val246–Cys269 form a helical membrane-spanning segment. Residues Arg270–Lys342 are Cytoplasmic-facing. Residues Thr343 to Leu367 form a helical membrane-spanning segment. The Extracellular portion of the chain corresponds to Phe368–Ser374. The helical transmembrane segment at Glu375 to Ser399 threads the bilayer. Over Ser400–Ile561 the chain is Cytoplasmic. The S-palmitoyl cysteine moiety is linked to residue Cys413. The tract at residues Ala452–Ala481 is disordered. Over residues Thr467–Lys479 the composition is skewed to polar residues.

This sequence belongs to the G-protein coupled receptor 1 family. Adrenergic receptor subfamily. ADRA1D sub-subfamily. Interacts with FLNA (via filamin repeat 21); increases PKA-mediated phosphorylation of FLNA. Post-translationally, palmitoylated. Palmitoylation by ZDHHC21 may increase the expression of the receptor and regulate downstream signaling. As to expression, vas deferens, hippocampus, cerebral cortex, aorta, brain stem, heart and spleen.

It localises to the cell membrane. In terms of biological role, this alpha-adrenergic receptor mediates its effect through the influx of extracellular calcium. The sequence is that of Alpha-1D adrenergic receptor (Adra1d) from Rattus norvegicus (Rat).